We begin with the raw amino-acid sequence, 173 residues long: Photosystem I assembly protein Ycf3 (173 aa).

3 TPR repeats span residues 35–68 (AFAY…EDDP), 72–105 (SYIL…NPRM), and 120–153 (GEKA…APNN).

This sequence belongs to the Ycf3 family.

It localises to the cellular thylakoid membrane. Functionally, essential for the assembly of the photosystem I (PSI) complex. May act as a chaperone-like factor to guide the assembly of the PSI subunits. This chain is Photosystem I assembly protein Ycf3, found in Picosynechococcus sp. (strain ATCC 27264 / PCC 7002 / PR-6) (Agmenellum quadruplicatum).